The following is a 748-amino-acid chain: MDNDDINNNNNNNNNNNNNNNSQELDQQEQTQEEITKQRIQKRKEEAKRIMEERKKREQQPPSQRQYEDVEDDQQQQPIRPIKQLPQRQQQYDDNDEPPQQQQYEPKISQRKVPLPPMKQPTTSSTASAATGSILSPSSNFREDMVKKAVLFLNNPNVKNTALARKVAYLEKKGLTSDEVKEALKRVETGNINGSSTNNSNITQSNSISRTRNDNYGNNNNNSSNNNNNIQQQQYYQQQQQQHQQQQQMALTQIQSYQKRLEADDQRIAQLMMNNNRFSWNSFLFSVTAIVGAASGLAYLTSNYIIPFLNGGKTNKDASANMDKKITSLQEEIIKLQSTIIQQGNDFRESTKSLKTLIEQQQQQILQQQQINSVSTTTNSATSASNSSEIVEIKKELKNLINLIGNKENSNNSNNNSNNSNNNNGYSKYNGFNGVYNKSSYDDVSTNNNNKTNSPPSPNKPTTTTTTTATSTPGSNISNTNKTLPPIIKTNPYSHLSWKLPTDQPPVIPSWQQKSSNPPSDLSNANDKSSPSNSNPSTPTKPYQSSFNYGDVNSFVGGSNTLNFDEKPTTTTTTSTTPSNERPSSPSVNNNNNNNNNNNNNNNNNNNNNNNTTIASTSNESNNSKVETTSNDSDKSTSPSSSSNNTTSTTATTTTITSASTEDNKQQSDETPYSSDFLDVINQLKQGKTPPGIRTDIDDKPLENSTVTKSAKERPKKPWERDTLTSVTNNLSVEETQTINNTDSSVEK.

Disordered stretches follow at residues 1 to 138 (MDND…LSPS) and 190 to 228 (GNIN…NNNN). The Peroxisomal portion of the chain corresponds to 1-277 (MDNDDINNNN…IAQLMMNNNR (277 aa)). The span at 7-30 (NNNNNNNNNNNNNNNSQELDQQEQ) shows a compositional bias: low complexity. Residues 8–60 (NNNNNNNNNNNNNNSQELDQQEQTQEEITKQRIQKRKEEAKRIMEERKKREQQ) adopt a coiled-coil conformation. Residues 43–59 (RKEEAKRIMEERKKREQ) are compositionally biased toward basic and acidic residues. Polar residues predominate over residues 86–104 (PQRQQQYDDNDEPPQQQQY). Composition is skewed to low complexity over residues 122–131 (TTSSTASAAT), 190–209 (GNIN…NSIS), and 218–228 (NNNNNSSNNNN). Positions 241 to 277 (QQHQQQQQMALTQIQSYQKRLEADDQRIAQLMMNNNR) form a coiled coil. A helical membrane pass occupies residues 278 to 300 (FSWNSFLFSVTAIVGAASGLAYL). Residues 301-748 (TSNYIIPFLN…INNTDSSVEK (448 aa)) lie on the Cytoplasmic side of the membrane. Residues 316-413 (KDASANMDKK…IGNKENSNNS (98 aa)) are a coiled coil. Disordered stretches follow at residues 406 to 673 (NKEN…ETPY) and 685 to 748 (KQGK…SVEK). Low complexity-rich tracts occupy residues 409–424 (NSNN…NNNN) and 445–476 (STNN…PGSN). Positions 510–527 (SWQQKSSNPPSDLSNAND) are enriched in polar residues. Low complexity-rich tracts occupy residues 528 to 542 (KSSP…PTKP) and 569 to 611 (TTTT…NNNN). Over residues 612–627 (TTIASTSNESNNSKVE) the composition is skewed to polar residues. Residues 628–661 (TTSNDSDKSTSPSSSSNNTTSTTATTTTITSAST) show a composition bias toward low complexity. The segment covering 710-723 (SAKERPKKPWERDT) has biased composition (basic and acidic residues). Residues 724–748 (LTSVTNNLSVEETQTINNTDSSVEK) are compositionally biased toward polar residues.

It belongs to the peroxin-14 family. As to quaternary structure, interacts with PEX13; forming the PEX13-PEX14 docking complex. Interacts with PEX5 (via WxxxF/Y motifs).

The protein resides in the peroxisome membrane. Its function is as follows. Component of the PEX13-PEX14 docking complex, a translocon channel that specifically mediates the import of peroxisomal cargo proteins bound to PEX5 receptor. The PEX13-PEX14 docking complex forms a large import pore which can be opened to a diameter of about 9 nm. Mechanistically, PEX5 receptor along with cargo proteins associates with the PEX14 subunit of the PEX13-PEX14 docking complex in the cytosol, leading to the insertion of the receptor into the organelle membrane with the concomitant translocation of the cargo into the peroxisome matrix. The protein is Peroxisomal membrane protein PEX14 (pex14) of Dictyostelium discoideum (Social amoeba).